The sequence spans 653 residues: Chaperone protein DnaK (653 aa).

Phosphothreonine; by autocatalysis is present on T200. The segment at 615–653 (AEAAAAGAAGAGGAGASAGGASQQQDDVVDAEFKEVKKD) is disordered. Positions 623-632 (AGAGGAGASA) are enriched in gly residues.

Belongs to the heat shock protein 70 family.

Functionally, acts as a chaperone. This Paraburkholderia xenovorans (strain LB400) protein is Chaperone protein DnaK.